Consider the following 877-residue polypeptide: Clumping factor B (877 aa).

An N-terminal signal peptide occupies residues M1–A44. Residues Y15 to S26 carry the YSIRK-G/S signaling motif motif. Composition is skewed to polar residues over residues A44–A61 and M68–S95. The segment at A44 to T192 is disordered. The ligand binding A region stretch occupies residues S45–N542. The span at T96–P119 shows a compositional bias: low complexity. The segment covering Q120–S189 has biased composition (polar residues). The MIDAS-like motif signature appears at D272–S276. A disordered region spans residues Y530–N849. A compositionally biased stretch (pro residues) spans D545–E555. The span at P556–D801 shows a compositional bias: acidic residues. Residues R805 to P816 show a composition bias toward polar residues. The span at H833 to E846 shows a compositional bias: basic and acidic residues. Residues L838 to G842 carry the LPXTG sorting signal motif. Position 841 is a pentaglycyl murein peptidoglycan amidated threonine (T841). The propeptide at G842–A877 is removed by sortase.

This sequence belongs to the serine-aspartate repeat-containing protein (SDr) family. Proteolytically cleaved by aureolysin (aur). This cleavage leads to the inactivation of ClfB.

It localises to the secreted. It is found in the cell wall. Functionally, cell surface-associated protein implicated in virulence by promoting bacterial attachment to both alpha- and beta-chains of human fibrinogen and inducing the formation of bacterial clumps. Partly responsible for mediating bacterial attachment to the highly keratinized squamous epithelial cells from the nasal cavity via an interaction with cytokeratin K10 (K10). Also promotes bacterial attachment to cultured keratinocytes, possibly through an interaction with cytokeratin K10. Binds mouse cytokeratin K10. Activates human platelet aggregation. In Staphylococcus aureus (strain NCTC 8325 / PS 47), this protein is Clumping factor B (clfB).